The sequence spans 137 residues: Large-conductance mechanosensitive channel (137 aa).

2 consecutive transmembrane segments (helical) span residues 10–30 and 76–96; these read FAMR…AAFG and GVFI…FMAI.

It belongs to the MscL family. Homopentamer.

The protein localises to the cell inner membrane. In terms of biological role, channel that opens in response to stretch forces in the membrane lipid bilayer. May participate in the regulation of osmotic pressure changes within the cell. This Escherichia coli O45:K1 (strain S88 / ExPEC) protein is Large-conductance mechanosensitive channel.